A 149-amino-acid chain; its full sequence is Large ribosomal subunit protein uL11 (149 aa).

The protein belongs to the universal ribosomal protein uL11 family. Part of the ribosomal stalk of the 50S ribosomal subunit. Interacts with L10 and the large rRNA to form the base of the stalk. L10 forms an elongated spine to which L12 dimers bind in a sequential fashion forming a multimeric L10(L12)X complex. In terms of processing, one or more lysine residues are methylated.

In terms of biological role, forms part of the ribosomal stalk which helps the ribosome interact with GTP-bound translation factors. This Methylobacterium sp. (strain 4-46) protein is Large ribosomal subunit protein uL11.